The primary structure comprises 81 residues: Styelin-D (81 aa).

A signal peptide spans 1-22; it reads MQMKATILIVLVALFMIQQSEA. Residue W24 is modified to 6'-bromotryptophan. R26 is subject to 3,4-dihydroxyarginine. 3 positions are modified to 4,5-dihydroxylysine: K27, K30, and K34. Residues Y36 and Y37 each carry the 3',4'-dihydroxyphenylalanine modification. Residue K38 is modified to 4,5-dihydroxylysine. K40 is subject to 5-hydroxylysine. A 3',4'-dihydroxyphenylalanine mark is found at Y41 and Y42. Residue K44 is modified to 5-hydroxylysine. L54 carries the leucine amide modification. Residues 56 to 81 constitute a propeptide, removed in mature form; sequence DMTDEEFQDFMKEVEQAREEELQSRQ.

Post-translationally, contains L-DOPA (3',4'-dihydroxyphenylalanine). In terms of tissue distribution, hemocytes and pharyngeal tissues.

Its subcellular location is the secreted. Functionally, bactericidal against several Gram-positive and Gram-negative bacteria. Plays a significant role in the innate immune mechanisms of S.clava. The protein is Styelin-D of Styela clava (Sea squirt).